We begin with the raw amino-acid sequence, 166 residues long: NAD(P)H-quinone oxidoreductase subunit I, chloroplastic (166 aa).

2 consecutive 4Fe-4S ferredoxin-type domains span residues 55–84 and 95–124; these read GRIHFEFDKCIACEVCVRVCPIDLPVVDWK and LNYSIDFGICIFCGNCVEYCPTNCLSMTEE. Residues cysteine 64, cysteine 67, cysteine 70, cysteine 74, cysteine 104, cysteine 107, cysteine 110, and cysteine 114 each contribute to the [4Fe-4S] cluster site.

Belongs to the complex I 23 kDa subunit family. NDH is composed of at least 16 different subunits, 5 of which are encoded in the nucleus. [4Fe-4S] cluster serves as cofactor.

It localises to the plastid. Its subcellular location is the chloroplast thylakoid membrane. The catalysed reaction is a plastoquinone + NADH + (n+1) H(+)(in) = a plastoquinol + NAD(+) + n H(+)(out). The enzyme catalyses a plastoquinone + NADPH + (n+1) H(+)(in) = a plastoquinol + NADP(+) + n H(+)(out). In terms of biological role, NDH shuttles electrons from NAD(P)H:plastoquinone, via FMN and iron-sulfur (Fe-S) centers, to quinones in the photosynthetic chain and possibly in a chloroplast respiratory chain. The immediate electron acceptor for the enzyme in this species is believed to be plastoquinone. Couples the redox reaction to proton translocation, and thus conserves the redox energy in a proton gradient. This chain is NAD(P)H-quinone oxidoreductase subunit I, chloroplastic, found in Chamaechaenactis scaposa (Fullstem).